The sequence spans 796 residues: Endonuclease MutS2 (796 aa).

Residue 339 to 346 (GPNTGGKT) participates in ATP binding. Residues 620–644 (EKLGDTDSSLVSKAKKNRKQHKPSD) form a disordered region. The Smr domain occupies 721–796 (LNIIGKRVDE…DHGVTIVEFK (76 aa)).

Belongs to the DNA mismatch repair MutS family. MutS2 subfamily. In terms of assembly, homodimer. Binds to stalled ribosomes, contacting rRNA.

Endonuclease that is involved in the suppression of homologous recombination and thus may have a key role in the control of bacterial genetic diversity. In terms of biological role, acts as a ribosome collision sensor, splitting the ribosome into its 2 subunits. Detects stalled/collided 70S ribosomes which it binds and splits by an ATP-hydrolysis driven conformational change. Acts upstream of the ribosome quality control system (RQC), a ribosome-associated complex that mediates the extraction of incompletely synthesized nascent chains from stalled ribosomes and their subsequent degradation. Probably generates substrates for RQC. The chain is Endonuclease MutS2 from Lachnoclostridium phytofermentans (strain ATCC 700394 / DSM 18823 / ISDg) (Clostridium phytofermentans).